Reading from the N-terminus, the 782-residue chain is E3 UFM1-protein ligase 1 homolog (782 aa).

The tract at residues 404–477 (NASTQELEDD…GSRGGGGVNK (74 aa)) is disordered. The segment covering 443 to 453 (KSTKKHQRGKA) has biased composition (basic residues).

Belongs to the UFL1 family.

E3 UFM1-protein ligase that mediates ufmylation of target proteins. The protein is E3 UFM1-protein ligase 1 homolog of Drosophila erecta (Fruit fly).